The following is a 160-amino-acid chain: Cytochrome b6-f complex subunit 4 (160 aa).

3 helical membrane-spanning segments follow: residues 36 to 56 (LLYMFPVVILGTIACLTGLAV), 95 to 115 (LLGIVLQSMIPLGLIAIPFIE), and 131 to 151 (AVFLFGTVFTLYLGIGAALPI).

Belongs to the cytochrome b family. PetD subfamily. As to quaternary structure, the 4 large subunits of the cytochrome b6-f complex are cytochrome b6, subunit IV (17 kDa polypeptide, PetD), cytochrome f and the Rieske protein, while the 4 small subunits are PetG, PetL, PetM and PetN. The complex functions as a dimer.

Its subcellular location is the cellular thylakoid membrane. Component of the cytochrome b6-f complex, which mediates electron transfer between photosystem II (PSII) and photosystem I (PSI), cyclic electron flow around PSI, and state transitions. In Synechococcus elongatus (strain ATCC 33912 / PCC 7942 / FACHB-805) (Anacystis nidulans R2), this protein is Cytochrome b6-f complex subunit 4.